The following is a 253-amino-acid chain: uncharacterized protein (253 aa).

The segment covering 200–209 has biased composition (basic and acidic residues); it reads TGREHAHKGP. Disordered regions lie at residues 200 to 225 and 234 to 253; these read TGRE…PNPA and QHSP…SAAT.

As to expression, most abundantly expressed in gastrointestinal tissues. Expressed at lower levels in kidney and placenta. Expressed in fetal brain, liver, placenta, kidney and lung.

This is an uncharacterized protein from Homo sapiens (Human).